We begin with the raw amino-acid sequence, 30 residues long: Phospholipase A2 acanmyotoxin-2 (30 aa).

Residues Y28 and G30 each contribute to the Ca(2+) site.

It depends on Ca(2+) as a cofactor. Contains seven disulfide bonds. Expressed by the venom gland.

The protein resides in the secreted. The enzyme catalyses a 1,2-diacyl-sn-glycero-3-phosphocholine + H2O = a 1-acyl-sn-glycero-3-phosphocholine + a fatty acid + H(+). Functionally, snake venom phospholipase A2 (PLA2) that has myotoxic activity but no significant neurotoxicity. PLA2 catalyzes the calcium-dependent hydrolysis of the 2-acyl groups in 3-sn-phosphoglycerides. This is Phospholipase A2 acanmyotoxin-2 from Acanthophis sp. (strain Seram) (Seram death adder).